We begin with the raw amino-acid sequence, 389 residues long: Sulfate adenylyltransferase (389 aa).

It belongs to the sulfate adenylyltransferase family.

It carries out the reaction sulfate + ATP + H(+) = adenosine 5'-phosphosulfate + diphosphate. It functions in the pathway sulfur metabolism; hydrogen sulfide biosynthesis; sulfite from sulfate: step 1/3. The chain is Sulfate adenylyltransferase from Microcystis aeruginosa (strain NIES-843 / IAM M-2473).